The following is a 716-amino-acid chain: Beta-1,2-glucosyltransferase (716 aa).

Residues Y52, I99, A101, E102, N175, E176, G278, W279, E343, and R349 each coordinate sophorose. E176 functions as the Proton donor/acceptor in the catalytic mechanism. The beta-D-glucose site is built by E176, G278, and W279. E343 serves as the catalytic Nucleophile. Beta-D-glucose-binding residues include R349, K358, and E361. Sophorose is bound at residue Y378. Residues S708 and Y709 each contribute to the beta-D-glucose site.

This sequence belongs to the glycosyl hydrolase 35 family. Homidimer.

The protein resides in the cytoplasm. It carries out the reaction a D-glucoside + [(1-&gt;2)-beta-D-glucosyl](n) = a beta-D-glucosyl-(1-&gt;2)-D-glucoside + [(1-&gt;2)-beta-D-glucosyl](n-1). Functionally, glycosyltransferase acting on beta-1,2-glucooligosaccharides. Catalyzes the transfer of a glucosyl residue from the non-reducing end of a 1,2-beta-D-glucan to a glucose residue of an acceptor molecule, forming a beta-1,2-glucosidic bond. The beta-1,2-linked glucose dimer sophorose is the preferred donor in vitro. Has a very broad specificity for the acceptor and can act on various aryl- and alkyl-glucosides. Does not show any hydrolytic activity. The chain is Beta-1,2-glucosyltransferase from Ignavibacterium album (strain DSM 19864 / JCM 16511 / NBRC 101810 / Mat9-16).